The sequence spans 857 residues: Leucine--tRNA ligase (857 aa).

The 'HIGH' region signature appears at 42–52; it reads PYPSGKLHMGH. The 'KMSKS' region motif lies at 620–624; the sequence is KMSKS. Lys623 is an ATP binding site.

It belongs to the class-I aminoacyl-tRNA synthetase family.

The protein resides in the cytoplasm. The catalysed reaction is tRNA(Leu) + L-leucine + ATP = L-leucyl-tRNA(Leu) + AMP + diphosphate. The sequence is that of Leucine--tRNA ligase from Thiobacillus denitrificans (strain ATCC 25259 / T1).